Consider the following 446-residue polypeptide: Exodeoxyribonuclease 7 large subunit (446 aa).

Belongs to the XseA family. In terms of assembly, heterooligomer composed of large and small subunits.

It is found in the cytoplasm. It carries out the reaction Exonucleolytic cleavage in either 5'- to 3'- or 3'- to 5'-direction to yield nucleoside 5'-phosphates.. In terms of biological role, bidirectionally degrades single-stranded DNA into large acid-insoluble oligonucleotides, which are then degraded further into small acid-soluble oligonucleotides. This is Exodeoxyribonuclease 7 large subunit from Streptococcus pneumoniae (strain ATCC 700669 / Spain 23F-1).